The following is a 98-amino-acid chain: Lipolysis-activating peptide 1-beta chain (98 aa).

The first 22 residues, 1–22 (MANVQVIFVAYIAVIAFSMVYG), serve as a signal peptide directing secretion. An LCN-type CS-alpha/beta domain is found at 23–91 (DDYKPFGEHN…FLKAMEKQCP (69 aa)). 3 cysteine pairs are disulfide-bonded: Cys37-Cys60, Cys45-Cys70, and Cys49-Cys72.

Belongs to the long (3 C-C) scorpion toxin superfamily. In terms of assembly, homodimer; disulfide-linked or monomer (edited version) or heterodimer of an alpha chain (AC B8XH01) and this beta chain (non-edited version). As to expression, expressed by the venom gland.

Its subcellular location is the secreted. In terms of biological role, the homodimer inhibits HMG-CoA reductase (HMGCR) (32% of inhibition produced by 0.6 uM), a glycoprotein involved in the control of cholesterol biosynthesis. The inhibitory effects of bumarsin are seen at much lower concentrations (0.6 uM) than that for statins such as atorvastatin (5 mM) and simvastatin (10 uM). In addition to inhibition of HMG-CoA reductase, this protein lowers cholesterol levels by inducing steroid hormone synthesis via StAR, and by increasing reverse cholesterol transport mediated by the induction of ABCA1 and APOA1. Functionally, the heterodimer non-edited LVP1 induces lipolysis in rat adipocytes. Induction of lipolysis by LVP1 appears to be mediated through the beta-2 adrenergic receptor pathway (ADRB2). The monomer edited version, similar to alpha-toxins, may modulate voltage-gated sodium channels (Nav) and may block voltage-gated potassium channels (Kv). The protein is Lipolysis-activating peptide 1-beta chain of Buthus israelis (Israeli scorpion).